The following is a 126-amino-acid chain: Protein ApaG (126 aa).

The 125-residue stretch at 2 to 126 (SDPRYQIDVS…FRLAVPGALH (125 aa)) folds into the ApaG domain.

This Pseudomonas fluorescens (strain SBW25) protein is Protein ApaG.